The sequence spans 381 residues: Succinyl-diaminopimelate desuccinylase (381 aa).

His68 lines the Zn(2+) pocket. The active site involves Asp70. Asp101 provides a ligand contact to Zn(2+). Catalysis depends on Glu135, which acts as the Proton acceptor. Zn(2+) is bound by residues Glu136, Glu164, and His350.

Belongs to the peptidase M20A family. DapE subfamily. In terms of assembly, homodimer. Zn(2+) is required as a cofactor. It depends on Co(2+) as a cofactor.

It carries out the reaction N-succinyl-(2S,6S)-2,6-diaminopimelate + H2O = (2S,6S)-2,6-diaminopimelate + succinate. Its pathway is amino-acid biosynthesis; L-lysine biosynthesis via DAP pathway; LL-2,6-diaminopimelate from (S)-tetrahydrodipicolinate (succinylase route): step 3/3. Its function is as follows. Catalyzes the hydrolysis of N-succinyl-L,L-diaminopimelic acid (SDAP), forming succinate and LL-2,6-diaminopimelate (DAP), an intermediate involved in the bacterial biosynthesis of lysine and meso-diaminopimelic acid, an essential component of bacterial cell walls. This chain is Succinyl-diaminopimelate desuccinylase, found in Neisseria meningitidis serogroup A / serotype 4A (strain DSM 15465 / Z2491).